The chain runs to 561 residues: DNA ligase B (561 aa).

The N6-AMP-lysine intermediate role is filled by lysine 125.

The protein belongs to the NAD-dependent DNA ligase family. LigB subfamily.

It carries out the reaction NAD(+) + (deoxyribonucleotide)n-3'-hydroxyl + 5'-phospho-(deoxyribonucleotide)m = (deoxyribonucleotide)n+m + AMP + beta-nicotinamide D-nucleotide.. Its function is as follows. Catalyzes the formation of phosphodiester linkages between 5'-phosphoryl and 3'-hydroxyl groups in double-stranded DNA using NAD as a coenzyme and as the energy source for the reaction. The polypeptide is DNA ligase B (Salmonella paratyphi A (strain AKU_12601)).